We begin with the raw amino-acid sequence, 59 residues long: Large ribosomal subunit protein uL30 (59 aa).

This sequence belongs to the universal ribosomal protein uL30 family. In terms of assembly, part of the 50S ribosomal subunit.

The chain is Large ribosomal subunit protein uL30 from Ectopseudomonas mendocina (strain ymp) (Pseudomonas mendocina).